Reading from the N-terminus, the 198-residue chain is Virion membrane protein A17 precursor homolog (198 aa).

Residues 1 to 55 (MDNNYLNYYNVFEEFDAGAGIKEKELFTEEQQLSFLPKKGLGNGGFDGVERLYSN) are Virion surface-facing. Residues 56–76 (IINNNDIKSLLALIMLVFAIN) traverse the membrane as a helical segment. Over 77–145 (TNSLVALIFI…TSKISKGFKR (69 aa)) the chain is Intravirion. Residues 146–166 (AIDVVLLVILGFYIVKIYGID) traverse the membrane as a helical segment. Topologically, residues 167–198 (RQISIPSRRYCRQMSGPSSLENLNAFQTHSNY) are virion surface. The residue at position 198 (Y198) is a Phosphotyrosine.

It belongs to the chordopoxvirinae A17 family. Interacts (via N-terminus) with D13 scaffold; this interaction helps D13 to associate with membranes. Interacts with A14. Interacts with A27; this interaction allows A27 to be anchored in the mature virion (MV) membrane. Part of a complex composed of A17, A25, A26 and A27. In terms of processing, the 22 kDa precursor is probably cleaved by the I7 protease during virus maturation. Phosphorylated on tyrosine and threonine. Its phosphorylation state is regulated by the F10 kinase and the H1 phosphatase. Phosphorylation by F10 kinase seems to be required to form the membranes associated with IV.

Its subcellular location is the virion membrane. In terms of biological role, envelope protein which participates in virus morphogenesis. Needed for an early step in viral crescent membrane formation by interacting with D13 scaffold protein. Its interaction with D13 scaffold protein leads to the formation of rigid, crescent-shaped membranes that assemble around the cytoplasmic virus factory. Membrane anchor for the protein A27. A17-A27 virus envelope protein might be involved in fusion or attachment, and can further associate to A26. This chain is Virion membrane protein A17 precursor homolog, found in Fowlpox virus (strain NVSL) (FPV).